A 632-amino-acid chain; its full sequence is 1-deoxy-D-xylulose-5-phosphate synthase (632 aa).

Thiamine diphosphate is bound by residues H74 and 115–117 (AHS). D146 serves as a coordination point for Mg(2+). Residues 147–148 (GA), N176, Y283, and E365 contribute to the thiamine diphosphate site. Residue N176 participates in Mg(2+) binding.

The protein belongs to the transketolase family. DXPS subfamily. In terms of assembly, homodimer. Mg(2+) serves as cofactor. Requires thiamine diphosphate as cofactor.

It catalyses the reaction D-glyceraldehyde 3-phosphate + pyruvate + H(+) = 1-deoxy-D-xylulose 5-phosphate + CO2. The protein operates within metabolic intermediate biosynthesis; 1-deoxy-D-xylulose 5-phosphate biosynthesis; 1-deoxy-D-xylulose 5-phosphate from D-glyceraldehyde 3-phosphate and pyruvate: step 1/1. Functionally, catalyzes the acyloin condensation reaction between C atoms 2 and 3 of pyruvate and glyceraldehyde 3-phosphate to yield 1-deoxy-D-xylulose-5-phosphate (DXP). The protein is 1-deoxy-D-xylulose-5-phosphate synthase of Paraburkholderia phymatum (strain DSM 17167 / CIP 108236 / LMG 21445 / STM815) (Burkholderia phymatum).